The chain runs to 80 residues: Translation initiation factor IF-1, chloroplastic (80 aa).

An S1-like domain is found at Met1–Arg74.

The protein belongs to the IF-1 family. As to quaternary structure, component of the 30S ribosomal translation pre-initiation complex which assembles on the 30S ribosome in the order IF-2 and IF-3, IF-1 and N-formylmethionyl-tRNA(fMet); mRNA recruitment can occur at any time during PIC assembly.

Its subcellular location is the plastid. It localises to the chloroplast. In terms of biological role, one of the essential components for the initiation of protein synthesis. Stabilizes the binding of IF-2 and IF-3 on the 30S subunit to which N-formylmethionyl-tRNA(fMet) subsequently binds. Helps modulate mRNA selection, yielding the 30S pre-initiation complex (PIC). Upon addition of the 50S ribosomal subunit IF-1, IF-2 and IF-3 are released leaving the mature 70S translation initiation complex. The polypeptide is Translation initiation factor IF-1, chloroplastic (Illicium parviflorum (Yellow anise tree)).